The chain runs to 356 residues: Sterol-4-alpha-carboxylate 3-dehydrogenase, decarboxylating (356 aa).

N-acetylmethionine is present on M1. Residue Y155 is the Proton acceptor of the active site. K159 is an NAD(+) binding site. Residues 281-301 traverse the membrane as a helical segment; sequence WLAYYLALLVSLLVMVISPVI. Positions 353 to 356 match the Prevents secretion from ER motif; the sequence is RKVM.

Belongs to the 3-beta-HSD family. As to quaternary structure, homodimer.

It localises to the endoplasmic reticulum membrane. The protein resides in the lipid droplet. The enzyme catalyses a 3beta-hydroxysteroid-4alpha-carboxylate + NADP(+) = a 3-oxosteroid + CO2 + NADPH. The catalysed reaction is a 3beta-hydroxysteroid-4alpha-carboxylate + NAD(+) = a 3-oxosteroid + CO2 + NADH. It catalyses the reaction 4alpha-carboxyzymosterol + NADP(+) = zymosterone + CO2 + NADPH. It carries out the reaction 4alpha-carboxy-4beta-methyl-5alpha-cholest-8-en-3beta-ol + NADP(+) = 4alpha-methyl-5alpha-cholest-8-en-3-one + CO2 + NADPH. The enzyme catalyses 4alpha-carboxy-5alpha-cholest-8-ene-3beta-ol + NADP(+) = 5alpha-cholest-8-en-3-one + CO2 + NADPH. The catalysed reaction is 4beta-methylzymosterol-4alpha-carboxylate + NADP(+) = 3-dehydro-4-methylzymosterol + CO2 + NADPH. It catalyses the reaction 4beta-methylzymosterol-4alpha-carboxylate + NAD(+) = 3-dehydro-4-methylzymosterol + CO2 + NADH. It carries out the reaction 4alpha-carboxy-5alpha-cholest-8-ene-3beta-ol + NAD(+) = 5alpha-cholest-8-en-3-one + CO2 + NADH. The enzyme catalyses 4alpha-carboxy-4beta-methyl-5alpha-cholest-8-en-3beta-ol + NAD(+) = 4alpha-methyl-5alpha-cholest-8-en-3-one + CO2 + NADH. The catalysed reaction is 4alpha-carboxyzymosterol + NAD(+) = zymosterone + CO2 + NADH. The protein operates within steroid biosynthesis; zymosterol biosynthesis; zymosterol from lanosterol: step 4/6. Functionally, catalyzes the NAD(P)(+)-dependent oxidative decarboxylation of the C4 methyl groups of 4-alpha-carboxysterols in post-squalene cholesterol biosynthesis. Also plays a role in the regulation of the endocytic trafficking of EGFR. This Bos taurus (Bovine) protein is Sterol-4-alpha-carboxylate 3-dehydrogenase, decarboxylating (NSDHL).